The sequence spans 156 residues: 3-hydroxyacyl-[acyl-carrier-protein] dehydratase FabZ (156 aa).

The active site involves His-57.

The protein belongs to the thioester dehydratase family. FabZ subfamily.

The protein localises to the cytoplasm. It carries out the reaction a (3R)-hydroxyacyl-[ACP] = a (2E)-enoyl-[ACP] + H2O. Functionally, involved in unsaturated fatty acids biosynthesis. Catalyzes the dehydration of short chain beta-hydroxyacyl-ACPs and long chain saturated and unsaturated beta-hydroxyacyl-ACPs. The sequence is that of 3-hydroxyacyl-[acyl-carrier-protein] dehydratase FabZ from Anaeromyxobacter dehalogenans (strain 2CP-1 / ATCC BAA-258).